The following is a 577-amino-acid chain: Protein NUCLEOLAR COMPLEX ASSOCIATED 4 (577 aa).

The interval 230–263 (PEKQAEKSQHEMWSGSDESISEKPTDKKKKTEKG) is disordered. The next 3 helical transmembrane spans lie at 329 to 349 (IGGVVSVMALSSLFILMTQHG), 350 to 370 (LEYPFFYEKLYALLVPSVFVA), and 404 to 424 (LSLSIPPAGSLVITALIYNLL).

This sequence belongs to the CBF/MAK21 family. Component of the ribosomal small subunit (SSU) processome composed of at least 40 protein subunits and snoRNA U3. In terms of tissue distribution, mostly expressed in flowers and stems and at lower levels in roots, hypocotyls, siliques, leaves and seeds.

The protein resides in the nucleus membrane. It localises to the nucleus. The protein localises to the nucleolus. Functionally, essential protein required during embryogenesis. Involved in nucleolar processing of ribosomal RNA (rRNA) 40S and 90S ribosomal subunits and ribosome assembly; early in ribosome biogenesis, especially required during the maturation of 5.8S rRNA. Has a role in the nuclear export of 40S pre-ribosomal subunit to the cytoplasm. The chain is Protein NUCLEOLAR COMPLEX ASSOCIATED 4 from Arabidopsis thaliana (Mouse-ear cress).